Reading from the N-terminus, the 309-residue chain is GTPase Era (309 aa).

One can recognise an Era-type G domain in the interval 16-186 (HAGFVAIVGK…REQILDALPE (171 aa)). A G1 region spans residues 24-31 (GKPNVGKS). 24–31 (GKPNVGKS) serves as a coordination point for GTP. Residues 50 to 54 (QTTRR) form a G2 region. The tract at residues 71–74 (DTPG) is G3. GTP-binding positions include 71–75 (DTPGL) and 133–136 (NKVD). Positions 133 to 136 (NKVD) are G4. A G5 region spans residues 164-166 (LSA). The KH type-2 domain occupies 217–294 (LREELPYAVA…FLGLEVIVIP (78 aa)).

Belongs to the TRAFAC class TrmE-Era-EngA-EngB-Septin-like GTPase superfamily. Era GTPase family. Monomer.

The protein localises to the cytoplasm. It localises to the cell membrane. Functionally, an essential GTPase that binds both GDP and GTP, with rapid nucleotide exchange. Plays a role in 16S rRNA processing and 30S ribosomal subunit biogenesis and possibly also in cell cycle regulation and energy metabolism. The polypeptide is GTPase Era (Deinococcus geothermalis (strain DSM 11300 / CIP 105573 / AG-3a)).